The sequence spans 313 residues: D-alanine--D-alanine ligase (313 aa).

The 201-residue stretch at 108 to 308 (KLVWQQTGVP…YSELVVKVLS (201 aa)) folds into the ATP-grasp domain. 138–193 (VAKLGLPLFVKPASEGSSVAVLKVKTADALPAALSEAATHDKIVIVEKSIEGGGEY) serves as a coordination point for ATP. Positions 262, 275, and 277 each coordinate Mg(2+).

It belongs to the D-alanine--D-alanine ligase family. Mg(2+) serves as cofactor. It depends on Mn(2+) as a cofactor.

Its subcellular location is the cytoplasm. The catalysed reaction is 2 D-alanine + ATP = D-alanyl-D-alanine + ADP + phosphate + H(+). It functions in the pathway cell wall biogenesis; peptidoglycan biosynthesis. Functionally, cell wall formation. The sequence is that of D-alanine--D-alanine ligase from Burkholderia vietnamiensis (strain G4 / LMG 22486) (Burkholderia cepacia (strain R1808)).